Here is a 367-residue protein sequence, read N- to C-terminus: Putrescine/agmatine-binding protein (367 aa).

Positions 1 to 19 (MKKVCALALSILTTIGATA) are cleaved as a signal peptide.

Belongs to the bacterial solute-binding protein 1 family.

Its subcellular location is the periplasm. Its function is as follows. Binds putrescine and agmatine. In Pseudomonas aeruginosa (strain ATCC 15692 / DSM 22644 / CIP 104116 / JCM 14847 / LMG 12228 / 1C / PRS 101 / PAO1), this protein is Putrescine/agmatine-binding protein.